The following is a 414-amino-acid chain: MNRQSWLLNLSLLKTHPAFRAVFLARFISIVSLGLLGVAVPVQIQMMTHSTWQVGLSVTLTGGAMFIGLMVGGVLADRYERKKVILLARGTCGIGFIGLCVNALLPEPSLLAIYLLGLWDGFFASLGVTALLAATPALVGRENLMQAGAITMLTVRLGSVISPMLGGILLASGGVAWNYGLAAAGTFITLLPLLTLPRLPVPPQPRENPFIALLAAFRFLLASPLIGGIALLGGLVTMASAVRVLYPALAMSWQMSAAQIGLLYAAIPLGAAIGALTSGQLAHSVRPGLIMLVSTVGSFLAVGLFAIMPIWIAGVICLALFGWLSAISSLLQYTLLQTQTPENMLGRMNGLWTAQNVTGDAIGAALLGGLGAMMTPVASASVSGFGLVIIGLLLLLVLGELRRFRQTPPVSDAG.

Topologically, residues 1–21 (MNRQSWLLNLSLLKTHPAFRA) are cytoplasmic. A helical membrane pass occupies residues 22 to 42 (VFLARFISIVSLGLLGVAVPV). At 43–55 (QIQMMTHSTWQVG) the chain is on the periplasmic side. The chain crosses the membrane as a helical span at residues 56 to 76 (LSVTLTGGAMFIGLMVGGVLA). Topologically, residues 77–83 (DRYERKK) are cytoplasmic. Residues 84-104 (VILLARGTCGIGFIGLCVNAL) traverse the membrane as a helical segment. At 105 to 109 (LPEPS) the chain is on the periplasmic side. Residues 110-130 (LLAIYLLGLWDGFFASLGVTA) traverse the membrane as a helical segment. The Cytoplasmic segment spans residues 131-156 (LLAATPALVGRENLMQAGAITMLTVR). Residues 157–177 (LGSVISPMLGGILLASGGVAW) form a helical membrane-spanning segment. N178 is a topological domain (periplasmic). Residues 179–199 (YGLAAAGTFITLLPLLTLPRL) traverse the membrane as a helical segment. Residues 200-218 (PVPPQPRENPFIALLAAFR) are Cytoplasmic-facing. Residues 219–239 (FLLASPLIGGIALLGGLVTMA) form a helical membrane-spanning segment. Over 240–256 (SAVRVLYPALAMSWQMS) the chain is Periplasmic. A helical membrane pass occupies residues 257–277 (AAQIGLLYAAIPLGAAIGALT). Residues 278–287 (SGQLAHSVRP) lie on the Cytoplasmic side of the membrane. The helical transmembrane segment at 288–307 (GLIMLVSTVGSFLAVGLFAI) threads the bilayer. Residues 308–313 (MPIWIA) lie on the Periplasmic side of the membrane. The helical transmembrane segment at 314–336 (GVICLALFGWLSAISSLLQYTLL) threads the bilayer. Residues 337-356 (QTQTPENMLGRMNGLWTAQN) lie on the Cytoplasmic side of the membrane. The helical transmembrane segment at 357 to 377 (VTGDAIGAALLGGLGAMMTPV) threads the bilayer. Residue A378 is a topological domain, periplasmic. The helical transmembrane segment at 379 to 399 (SASVSGFGLVIIGLLLLLVLG) threads the bilayer. At 400–414 (ELRRFRQTPPVSDAG) the chain is on the cytoplasmic side.

This sequence belongs to the major facilitator superfamily. EntS (TC 2.A.1.38) family.

It localises to the cell inner membrane. In terms of biological role, component of an export pathway for enterobactin. This Salmonella typhi protein is Enterobactin exporter EntS.